The following is a 722-amino-acid chain: Zinc finger protein 219 (722 aa).

Positions 1-21 are disordered; that stretch reads MEGSRPRAPSGHLAPSPPAFD. S16 carries the post-translational modification Phosphoserine. 2 C2H2-type zinc fingers span residues 57-79 and 85-107; these read FPCP…LRAH and FQCP…LRTH. The segment at 137–160 is disordered; that stretch reads ARSSGGMQATPATEGLARPQAPSS. 2 C2H2-type zinc fingers span residues 163-186 and 189-212; these read FRCP…HILH and WKCG…LTAH. Positions 215–275 are disordered; the sequence is PERPLAATSA…EEPPAPPEFR (61 aa). Composition is skewed to pro residues over residues 225 to 247 and 259 to 272; these read APPP…PQPE and TPAP…PAPP. 2 consecutive C2H2-type zinc fingers follow at residues 274 to 296 and 302 to 324; these read FRCQ…MRKH and HACP…MKVH. A disordered region spans residues 384-495; sequence LRAGEGRPNG…GTRPEGGRGA (112 aa). The segment covering 390–404 has biased composition (gly residues); the sequence is RPNGEGAEPGPGRSF. Residues 425 to 438 are compositionally biased toward acidic residues; it reads EPEEEEEVVEAEEE. Residues 463-477 are compositionally biased toward low complexity; it reads SASAAGAQARSTATQ. 2 consecutive C2H2-type zinc fingers follow at residues 498–520 and 526–548; these read KDCP…LRVH and YKCP…LQRH. 2 disordered regions span residues 542–648 and 668–722; these read KYHL…LHRC and HHSR…GQER. Positions 558–568 are enriched in pro residues; sequence PGPPPEPPPPS. Over residues 634 to 643 the composition is skewed to gly residues; it reads GPGGEAGPGG. Residues 646 to 668 form a C2H2-type 9 zinc finger; it reads HRCLFCPFATGAPELMALHLQVH. Over residues 668–677 the composition is skewed to basic residues; that stretch reads HHSRRARGRR. S692 carries the phosphoserine modification. Phosphothreonine is present on T695. S698 carries the post-translational modification Phosphoserine.

It belongs to the krueppel C2H2-type zinc-finger protein family. Interacts with SOX9 (via C-terminus). In terms of tissue distribution, ubiquitous.

The protein resides in the nucleus. Functionally, transcriptional regulator. Recognizes and binds 2 copies of the core DNA sequence motif 5'-GGGGG-3'. Binds to the HMGN1 promoter and may repress HMGN1 expression. Regulates SNCA expression in primary cortical neurons. Binds to the COL2A1 promoter and activates COL2A1 expression, as part of a complex with SOX9. Plays a role in chondrocyte differentiation. The protein is Zinc finger protein 219 (ZNF219) of Homo sapiens (Human).